The chain runs to 690 residues: Xylosyl- and glucuronyltransferase LARGE2 (690 aa).

At 1–7 the chain is on the cytoplasmic side; it reads MLPRGRP. The chain crosses the membrane as a helical; Signal-anchor for type II membrane protein span at residues 8–28; that stretch reads RALGAALLLLLLLVVGFFLFG. Residues 29–690 are Lumenal-facing; the sequence is RDPEYGLGTT…TALQQSRSRA (662 aa). Asn-50 and Asn-77 each carry an N-linked (GlcNAc...) asparagine glycan. Residues 67–342 are xylosyltransferase activity; the sequence is LHVAIVCAGY…FLGFDGKLLC (276 aa). Residues Asp-171 and Asp-173 each contribute to the Mn(2+) site. An N-linked (GlcNAc...) asparagine glycan is attached at Asn-201. The tract at residues 343–686 is glucuronyltransferase activity; the sequence is RELFGCPNQF…LKYLTALQQS (344 aa). The Mn(2+) site is built by Asp-491 and Asp-493.

It in the C-terminal section; belongs to the glycosyltransferase 49 family. The protein in the N-terminal section; belongs to the glycosyltransferase 8 family. In terms of assembly, interacts with B4GAT1. The cofactor is Mn(2+).

The protein localises to the golgi apparatus membrane. It catalyses the reaction 3-O-[beta-D-GlcA-(1-&gt;3)-beta-D-Xyl-(1-&gt;4)-Rib-ol-P-Rib-ol-P-3-beta-D-GalNAc-(1-&gt;3)-beta-D-GlcNAc-(1-&gt;4)-(O-6-P-alpha-D-Man)]-Thr-[protein] + UDP-alpha-D-xylose = 3-O-[alpha-D-Xyl-(1-&gt;3)-beta-D-GlcA-(1-&gt;4)-beta-D-Xyl-(1-&gt;4)-Rib-ol-P-Rib-ol-P-3-beta-D-GalNAc-(1-&gt;3)-beta-D-GlcNAc-(1-&gt;4)-(O-6-P-alpha-D-Man)]-Thr-[protein] + UDP + H(+). The enzyme catalyses 3-O-{(1-&gt;[3)-alpha-D-Xyl-(1-&gt;3)-beta-D-GlcA-(1-&gt;](n)-4)-beta-D-Xyl-(1-&gt;4)-Rib-ol-P-Rib-ol-P-3-beta-D-GalNAc-(1-&gt;3)-beta-D-GlcNAc-(1-&gt;4)-O-6-P-alpha-D-Man}-L-Thr-[protein] + UDP-alpha-D-glucuronate = 3-O-{beta-D-GlcA-(1-&gt;[3)-alpha-D-Xyl-(1-&gt;3)-beta-D-GlcA-(1-&gt;](n)-4)-beta-D-Xyl-(1-&gt;4)-Rib-ol-P-Rib-ol-P-3-beta-D-GalNAc-(1-&gt;3)-beta-D-GlcNAc-(1-&gt;4)-O-6-P-alpha-D-Man}-L-Thr-[protein] + UDP + H(+). It carries out the reaction 3-O-{beta-D-GlcA-(1-&gt;[3)-alpha-D-Xyl-(1-&gt;3)-beta-D-GlcA-(1-&gt;](n)-4)-beta-D-Xyl-(1-&gt;4)-Rib-ol-P-Rib-ol-P-3-beta-D-GalNAc-(1-&gt;3)-beta-D-GlcNAc-(1-&gt;4)-O-6-P-alpha-D-Man}-L-Thr-[protein] + UDP-alpha-D-xylose = 3-O-{(1-&gt;[3)-alpha-D-Xyl-(1-&gt;3)-beta-D-GlcA-(1-&gt;](n+1)-4)-beta-D-Xyl-(1-&gt;4)-Rib-ol-P-Rib-ol-P-3-beta-D-GalNAc-(1-&gt;3)-beta-D-GlcNAc-(1-&gt;4)-O-6-P-alpha-D-Man}-L-Thr-[protein] + UDP + H(+). Its pathway is protein modification; protein glycosylation. Its function is as follows. Bifunctional glycosyltransferase with both alpha-1,3-xylosyltransferase and beta-1,3-glucuronyltransferase activities involved in the maturation of alpha-dystroglycan (DAG1) by glycosylation leading to DAG1 binding to laminin G-like domain-containing extracellular proteins with high affinity and in a phosphorylated-O-mannosyl trisaccharide dependent manner. Elongates the glucuronyl-beta-1,4-xylose-beta disaccharide primer structure by adding repeating units [-3-Xylose-alpha-1,3-GlcA-beta-1-] to produce a heteropolysaccharide. Supports the maturation of DAG1 more effectively than LARGE1. In addition, can modify both heparan sulfate (HS)- and chondroitin/dermatan sulfate (CS/DS)-proteoglycans (PGs), namely GPC4, with a glycosaminoglycan (GAG)-like polysaccharide composed of xylose and glucuronic acid to confer laminin binding. The polypeptide is Xylosyl- and glucuronyltransferase LARGE2 (Rattus norvegicus (Rat)).